The chain runs to 218 residues: Thiamine-phosphate synthase (218 aa).

Residues 43–47 (QLRMK) and asparagine 75 contribute to the 4-amino-2-methyl-5-(diphosphooxymethyl)pyrimidine site. Mg(2+) is bound by residues aspartate 76 and aspartate 95. Threonine 114 contacts 4-amino-2-methyl-5-(diphosphooxymethyl)pyrimidine. 140-142 (TST) provides a ligand contact to 2-[(2R,5Z)-2-carboxy-4-methylthiazol-5(2H)-ylidene]ethyl phosphate. Lysine 143 contacts 4-amino-2-methyl-5-(diphosphooxymethyl)pyrimidine. 2-[(2R,5Z)-2-carboxy-4-methylthiazol-5(2H)-ylidene]ethyl phosphate contacts are provided by residues glycine 171 and 191-192 (VS).

It belongs to the thiamine-phosphate synthase family. Mg(2+) is required as a cofactor.

It catalyses the reaction 2-[(2R,5Z)-2-carboxy-4-methylthiazol-5(2H)-ylidene]ethyl phosphate + 4-amino-2-methyl-5-(diphosphooxymethyl)pyrimidine + 2 H(+) = thiamine phosphate + CO2 + diphosphate. It carries out the reaction 2-(2-carboxy-4-methylthiazol-5-yl)ethyl phosphate + 4-amino-2-methyl-5-(diphosphooxymethyl)pyrimidine + 2 H(+) = thiamine phosphate + CO2 + diphosphate. The catalysed reaction is 4-methyl-5-(2-phosphooxyethyl)-thiazole + 4-amino-2-methyl-5-(diphosphooxymethyl)pyrimidine + H(+) = thiamine phosphate + diphosphate. It participates in cofactor biosynthesis; thiamine diphosphate biosynthesis; thiamine phosphate from 4-amino-2-methyl-5-diphosphomethylpyrimidine and 4-methyl-5-(2-phosphoethyl)-thiazole: step 1/1. Condenses 4-methyl-5-(beta-hydroxyethyl)thiazole monophosphate (THZ-P) and 2-methyl-4-amino-5-hydroxymethyl pyrimidine pyrophosphate (HMP-PP) to form thiamine monophosphate (TMP). This Myxococcus xanthus (strain DK1622) protein is Thiamine-phosphate synthase.